A 161-amino-acid chain; its full sequence is MAQESWKNESEETVHTPEAPILCVNNCGFFGSSMTNNMCSKCYRDFVKVTTMAAPVVEKKAFTPASSSKTPLEPAKPDEVPAAAVEDKQAAQEPPKPPSNRCLSCRKKVGLTGFQCRCGGTFCSTHRYTEAHDCTFDYKKAGRDQIAKQNPVVIAEKINKI.

The segment at 17–51 adopts an A20-type zinc-finger fold; that stretch reads PEAPILCVNNCGFFGSSMTNNMCSKCYRDFVKVTT. Residues Cys23, Cys27, Cys39, and Cys42 each coordinate Zn(2+). The tract at residues 62–99 is disordered; sequence FTPASSSKTPLEPAKPDEVPAAAVEDKQAAQEPPKPPS. Basic and acidic residues predominate over residues 75-90; the sequence is AKPDEVPAAAVEDKQA. The segment at 96-142 adopts an AN1-type zinc-finger fold; it reads KPPSNRCLSCRKKVGLTGFQCRCGGTFCSTHRYTEAHDCTFDYKKAG. Zn(2+)-binding residues include Cys102, Cys105, Cys116, Cys118, Cys123, His126, His132, and Cys134.

May be involved in environmental stress response. The sequence is that of Zinc finger A20 and AN1 domain-containing stress-associated protein 9 (SAP9) from Oryza sativa subsp. japonica (Rice).